Here is a 403-residue protein sequence, read N- to C-terminus: Ribosomal RNA large subunit methyltransferase I (403 aa).

Positions 9-88 (YPRLVLSKGR…ESIDIAFFTR (80 aa)) constitute a PUA domain.

The protein belongs to the methyltransferase superfamily. RlmI family.

It is found in the cytoplasm. The enzyme catalyses cytidine(1962) in 23S rRNA + S-adenosyl-L-methionine = 5-methylcytidine(1962) in 23S rRNA + S-adenosyl-L-homocysteine + H(+). In terms of biological role, specifically methylates the cytosine at position 1962 (m5C1962) of 23S rRNA. This chain is Ribosomal RNA large subunit methyltransferase I, found in Salmonella enteritidis PT4 (strain P125109).